The sequence spans 352 residues: Small ribosomal subunit biogenesis GTPase RsgA (352 aa).

Over residues 1–15 (MTKRKLTQNQKRRIH) the composition is skewed to basic residues. The interval 1–26 (MTKRKLTQNQKRRIHSNNVKALDRHH) is disordered. Residues 106–274 (ENEIARPDYY…LIDSPGIREF (169 aa)) enclose the CP-type G domain. Residues 162 to 165 (NKVD) and 216 to 224 (GQSGVGKSS) each bind GTP. Residues Cys298, Cys303, His305, and Cys311 each coordinate Zn(2+).

This sequence belongs to the TRAFAC class YlqF/YawG GTPase family. RsgA subfamily. Monomer. Associates with 30S ribosomal subunit, binds 16S rRNA. Zn(2+) is required as a cofactor.

The protein resides in the cytoplasm. In terms of biological role, one of several proteins that assist in the late maturation steps of the functional core of the 30S ribosomal subunit. Helps release RbfA from mature subunits. May play a role in the assembly of ribosomal proteins into the subunit. Circularly permuted GTPase that catalyzes slow GTP hydrolysis, GTPase activity is stimulated by the 30S ribosomal subunit. This is Small ribosomal subunit biogenesis GTPase RsgA from Mannheimia succiniciproducens (strain KCTC 0769BP / MBEL55E).